We begin with the raw amino-acid sequence, 457 residues long: Oxygen-independent coproporphyrinogen III oxidase (457 aa).

Residues 47 to 279 (LKNPMPLSLY…EILESLISFL (233 aa)) form the Radical SAM core domain. Tyr-56 is an S-adenosyl-L-methionine binding site. Residues Cys-62 and Cys-66 each coordinate [4Fe-4S] cluster. Residue Phe-68 participates in S-adenosyl-L-methionine binding. Cys-69 lines the [4Fe-4S] cluster pocket. Residues Gly-113, 114–115 (GT), Glu-147, Gln-174, Arg-186, Asp-211, Ala-245, and Ile-331 contribute to the S-adenosyl-L-methionine site.

The protein belongs to the anaerobic coproporphyrinogen-III oxidase family. As to quaternary structure, monomer. The cofactor is [4Fe-4S] cluster.

It localises to the cytoplasm. It catalyses the reaction coproporphyrinogen III + 2 S-adenosyl-L-methionine = protoporphyrinogen IX + 2 5'-deoxyadenosine + 2 L-methionine + 2 CO2. The protein operates within porphyrin-containing compound metabolism; protoporphyrin-IX biosynthesis; protoporphyrinogen-IX from coproporphyrinogen-III (AdoMet route): step 1/1. Involved in the heme biosynthesis. Catalyzes the anaerobic oxidative decarboxylation of propionate groups of rings A and B of coproporphyrinogen III to yield the vinyl groups in protoporphyrinogen IX. This chain is Oxygen-independent coproporphyrinogen III oxidase (hemN), found in Helicobacter pylori (strain J99 / ATCC 700824) (Campylobacter pylori J99).